The sequence spans 327 residues: MAITDTINVAIVGASGVTGGSIVNGLLALTGLTVKITALTRPESLNKPANIQLKERGVQVVAANLRGPLEKLVDLLSSIDVVISAIYWGSLDDEIPLANAAKAAGVKRFVQSAYNIPAAARGVTHLRDKKEVILSHIQQLRLPYTYIDVGWWYHVVLPRVASGRTEHALPFGMPDLPIALDGNIPSGLTHIRDIGRYIARIILDPRTVNKKVFVYNELYTQNQLCDLVERLTGEMPQRRYISEKCVQSWLQEALDELERNPSSDIALGVVSLREVFLASNVHGTNTPEYAKYLGYLDGKELYPDFTFLTYEDYVEEVLDGMHSQTVA.

Residues 9–29 traverse the membrane as a helical segment; the sequence is VAIVGASGVTGGSIVNGLLAL. Residues 13–19 and lysine 47 each bind NADP(+); that span reads GASGVTG. The active-site Proton acceptor is the lysine 130.

This sequence belongs to the NmrA-type oxidoreductase family.

It is found in the membrane. The catalysed reaction is asnovolin K + AH2 = asnovolin A + A. The enzyme catalyses chermesin D methyl ester + AH2 = asnovolin J + A. It functions in the pathway secondary metabolite biosynthesis; terpenoid biosynthesis. Functionally, asnovolin J 5',6'-dehydrogenase; part of the gene cluster that mediates the biosynthesis of novofumigatonin, a heavily oxygenated meroterpenoid containing a unique orthoester moiety. The first step of the pathway is the synthesis of 3,5-dimethylorsellinic acid (DMOA) by the polyketide synthase nvfA via condensation of one acetyl-CoA starter unit with 3 malonyl-CoA units and 2 methylations. DMOA is then converted to farnesyl-DMOA by the farnesyltransferase nvfB. Epoxydation by FAD-dependent monooxygenase nvfK, followed by a protonation-initiated cyclization catalyzed by the terpene cyclase nvfL leads to the production of asnavolin H. The short chain dehydrogenase nvfC then as a 3-OH dehydrogenase of asnovolin H to yield chemesin D. There are two branches to synthesize asnovolin A from chemesin D. In one branch, chemesin D undergoes Baeyer-Villiger oxidation by nvfH, methylation by nvfJ, and enoyl reduction by the nvfM D enoylreductase that reduces the double bond between C-5'and C-6', to form respectively asnovolin I, asnovolin K, and asnovolin A. In the other branch, the methylation precedes the Baeyer-Villiger oxidation and the enoyl reduction to yield asnovolin A via the asnovolin J intermediate. Asnovolin A is further converted to fumigatonoid A by the Fe(II)/2-oxoglutarate-dependent dioxygenase nvfI that catalyzes an endoperoxidation reaction. The alpha/beta hydrolase nvfD then acts as an epimerase that converts fumigatonoid A to its C-5' epimer, which then undergoes spontaneous or nvfD-catalyzed lactonization. The following step utilizes the ketoreductase nvfG to produce fumigatonoid B. The dioxygenase nvfE further converts fumigatonoid B into fumigatonoid C. Finally the Fe(II)/2-oxoglutarate-dependent dioxygenase nvfF catalyzes two rounds of oxidation to transform fumigatonoid C into the end product, novofumigatonin A. This is Asnovolin J 5',6'-dehydrogenase nvfM from Aspergillus novofumigatus (strain IBT 16806).